The following is an 818-amino-acid chain: Rho GTPase-activating protein 44 (818 aa).

One can recognise a BAR domain in the interval 14 to 249; it reads QTVGRAEKTE…IKAQQEAWVE (236 aa). In terms of domain architecture, Rho-GAP spans 255 to 445; it reads KPLEEHLTIS…PIIQHADWFF (191 aa). 3 disordered regions span residues 467-493, 530-772, and 789-818; these read ANYS…RPLS, SSAG…SMST, and TLRL…STAL. Residues 479-489 show a composition bias toward basic and acidic residues; that stretch reads PADRRQPEQAR. Phosphoserine is present on Ser-493. Low complexity predominate over residues 563-579; the sequence is QPLDSPAAPALSPSGLG. Residues 598-611 show a composition bias toward polar residues; sequence GSAQKGSPGSSQGT. Low complexity-rich tracts occupy residues 614 to 641 and 688 to 708; these read AGTQ…DQSP and SPYG…LSPA. The segment at 731–818 is interaction with BST2; the sequence is KPRQRPTLPP…SEEESESTAL (88 aa). Residues 746–757 show a composition bias toward polar residues; sequence VNLSASSPQSTE. The PDZ-binding signature appears at 764-767; it reads MSPG. Over residues 794–809 the composition is skewed to basic and acidic residues; sequence PLEHMRRHSVTDKRDS. Residue Ser-809 is modified to Phosphoserine. The PDZ-binding signature appears at 815–818; that stretch reads STAL.

Interacts with BST2 (via cytoplasmic domain). Interacts (probably via PDZ-binding motif) with SHANK3 (via PDZ domain); the interaction takes place in dendritic spines and promotes GRIA1 exocytosis. As to expression, highly expressed in brain. Expressed at weak level in other tissues.

The protein localises to the cell projection. Its subcellular location is the dendritic spine. It is found in the recycling endosome. The protein resides in the presynapse. It localises to the dendrite. In terms of biological role, GTPase-activating protein (GAP) that stimulates the GTPase activity of Rho-type GTPases. Thereby, controls Rho-type GTPases cycling between their active GTP-bound and inactive GDP-bound states. Acts as a GAP at least for CDC42 and RAC1. In neurons, is involved in dendritic spine formation and synaptic plasticity in a specific RAC1-GAP activity. Limits the initiation of exploratory dendritic filopodia. Recruited to actin-patches that seed filopodia, binds specifically to plasma membrane sections that are deformed inward by acto-myosin mediated contractile forces. Acts through GAP activity on RAC1 to reduce actin polymerization necessary for filopodia formation. In association with SHANK3, promotes GRIA1 exocytosis from recycling endosomes and spine morphological changes associated to long-term potentiation. This is Rho GTPase-activating protein 44 from Homo sapiens (Human).